An 86-amino-acid polypeptide reads, in one-letter code: ATP synthase subunit c (86 aa).

Transmembrane regions (helical) follow at residues 13–33 and 63–83; these read FFAT…AGLA and ILGQ…AFIL.

It belongs to the ATPase C chain family. F-type ATPases have 2 components, F(1) - the catalytic core - and F(0) - the membrane proton channel. F(1) has five subunits: alpha(3), beta(3), gamma(1), delta(1), epsilon(1). F(0) has three main subunits: a(1), b(2) and c(10-14). The alpha and beta chains form an alternating ring which encloses part of the gamma chain. F(1) is attached to F(0) by a central stalk formed by the gamma and epsilon chains, while a peripheral stalk is formed by the delta and b chains.

The protein resides in the cell membrane. Its function is as follows. F(1)F(0) ATP synthase produces ATP from ADP in the presence of a proton or sodium gradient. F-type ATPases consist of two structural domains, F(1) containing the extramembraneous catalytic core and F(0) containing the membrane proton channel, linked together by a central stalk and a peripheral stalk. During catalysis, ATP synthesis in the catalytic domain of F(1) is coupled via a rotary mechanism of the central stalk subunits to proton translocation. Functionally, key component of the F(0) channel; it plays a direct role in translocation across the membrane. A homomeric c-ring of between 10-14 subunits forms the central stalk rotor element with the F(1) delta and epsilon subunits. The protein is ATP synthase subunit c of Acholeplasma laidlawii (strain PG-8A).